Reading from the N-terminus, the 341-residue chain is UDP-3-O-acylglucosamine N-acyltransferase (341 aa).

His-241 serves as the catalytic Proton acceptor.

It belongs to the transferase hexapeptide repeat family. LpxD subfamily. In terms of assembly, homotrimer.

The catalysed reaction is a UDP-3-O-[(3R)-3-hydroxyacyl]-alpha-D-glucosamine + a (3R)-hydroxyacyl-[ACP] = a UDP-2-N,3-O-bis[(3R)-3-hydroxyacyl]-alpha-D-glucosamine + holo-[ACP] + H(+). Its pathway is bacterial outer membrane biogenesis; LPS lipid A biosynthesis. In terms of biological role, catalyzes the N-acylation of UDP-3-O-acylglucosamine using 3-hydroxyacyl-ACP as the acyl donor. Is involved in the biosynthesis of lipid A, a phosphorylated glycolipid that anchors the lipopolysaccharide to the outer membrane of the cell. This is UDP-3-O-acylglucosamine N-acyltransferase from Christiangramia forsetii (strain DSM 17595 / CGMCC 1.15422 / KT0803) (Gramella forsetii).